A 326-amino-acid chain; its full sequence is Ribosomal RNA small subunit methyltransferase H (326 aa).

S-adenosyl-L-methionine is bound by residues 45–47 (GGH), aspartate 65, aspartate 113, and glutamine 120. Positions 299 to 326 (PSAEEITRNPRSRSARLRAAERIAHDGR) are disordered. Over residues 316 to 326 (RAAERIAHDGR) the composition is skewed to basic and acidic residues.

It belongs to the methyltransferase superfamily. RsmH family.

It localises to the cytoplasm. The enzyme catalyses cytidine(1402) in 16S rRNA + S-adenosyl-L-methionine = N(4)-methylcytidine(1402) in 16S rRNA + S-adenosyl-L-homocysteine + H(+). Functionally, specifically methylates the N4 position of cytidine in position 1402 (C1402) of 16S rRNA. In Thermomicrobium roseum (strain ATCC 27502 / DSM 5159 / P-2), this protein is Ribosomal RNA small subunit methyltransferase H.